The primary structure comprises 428 residues: MSEIREVIAREILDSRGNPTVEVDVILEDGTWGRAAVPSGASTGAFEAVELRDNDPQRYLGKGVTQAVENVNSIIGPEILGFDALDQVGIDEYLIELDGTPNKGKLGANAILGVSMAVAKAAANYLGLPLYRYLGGTNARVLPAPMMNILNGGKHADNNVDIQEFMIMPLGASSFSEALRMGAEVFHNLKKVLKGKGYNTAVGDEGGFAPNLKSNEEAIEVIVEAIEKAGYTPGKDIYIALDVAATELYKDGFYVLEGEGVKKSAAEMVEYYEKLCAKYPIISIEDGMSEEDWDGWKLLTERLGKKIQLVGDDLFVTNVERLQKGIDLGVANSILIKLNQIGTITETLNTIELARQNGYTTIISHRSGETEDTTLADLAVAVNAGMIKTGAPSRTDRVAKYNQLLRIEEELDYTAIYKGLKAFYNIKA.

Gln163 is a binding site for (2R)-2-phosphoglycerate. The active-site Proton donor is Glu205. Mg(2+) contacts are provided by Asp242, Glu285, and Asp312. Positions 337, 366, 367, and 388 each coordinate (2R)-2-phosphoglycerate. Lys337 acts as the Proton acceptor in catalysis.

This sequence belongs to the enolase family. Requires Mg(2+) as cofactor.

It is found in the cytoplasm. It localises to the secreted. The protein localises to the cell surface. It carries out the reaction (2R)-2-phosphoglycerate = phosphoenolpyruvate + H2O. The protein operates within carbohydrate degradation; glycolysis; pyruvate from D-glyceraldehyde 3-phosphate: step 4/5. Functionally, catalyzes the reversible conversion of 2-phosphoglycerate (2-PG) into phosphoenolpyruvate (PEP). It is essential for the degradation of carbohydrates via glycolysis. In Carboxydothermus hydrogenoformans (strain ATCC BAA-161 / DSM 6008 / Z-2901), this protein is Enolase.